Consider the following 135-residue polypeptide: Retinol-binding protein 5 (135 aa).

Belongs to the calycin superfamily. Fatty-acid binding protein (FABP) family. In terms of tissue distribution, kidney.

It is found in the cytoplasm. In terms of biological role, intracellular transport of retinol. This Bos taurus (Bovine) protein is Retinol-binding protein 5 (RBP5).